Reading from the N-terminus, the 143-residue chain is UPF0047 protein MTH_771 (143 aa).

It belongs to the UPF0047 family.

The protein is UPF0047 protein MTH_771 of Methanothermobacter thermautotrophicus (strain ATCC 29096 / DSM 1053 / JCM 10044 / NBRC 100330 / Delta H) (Methanobacterium thermoautotrophicum).